Consider the following 536-residue polypeptide: Vacuolar segregation protein pep7 (536 aa).

The tract at residues 1-31 (MQNGKRRIGVRISSNLSNHSGTNLSTSAQSD) is disordered. Over residues 12–31 (ISSNLSNHSGTNLSTSAQSD) the composition is skewed to polar residues. Residues 39 to 62 (TECPICGLELPNLSALNDHLDVTH) form a C2H2-type zinc finger. Residues 136-201 (PDMVCHDPMC…VCRECYEGRP (66 aa)) form an FYVE-type 1; degenerate zinc finger. Positions 158, 161, 193, 196, 281, 284, 297, 300, 305, 308, 324, and 327 each coordinate Zn(2+). The FYVE-type 2 zinc finger occupies 275-332 (DSVVQICPECNNSFTLTRRRRHCRLCGRVICRFCVLEISLPQHPQPLLICMSCNQNYF).

Functionally, required for vacuole segregation and vacuole protein sorting. Possibly part of a complex which tethers the vacuole membrane to microtubules, either directly or via kinesin or dynein-like motor proteins. Probably functions in several interorganelle traffic pathways. The polypeptide is Vacuolar segregation protein pep7 (pep7) (Schizosaccharomyces pombe (strain 972 / ATCC 24843) (Fission yeast)).